The primary structure comprises 513 residues: GTPase Obg (513 aa).

The Obg domain occupies 3 to 160 (THFVDRVVVH…LDLHLEVKTL (158 aa)). The region spanning 161–337 (ADVALVGFPS…LSFAMAELVS (177 aa)) is the OBG-type G domain. GTP contacts are provided by residues 167–174 (GFPSAGKS), 192–196 (FTTLV), 213–216 (DVPG), 289–292 (NKAD), and 318–320 (SAV). The Mg(2+) site is built by Ser174 and Thr194. Residues 355–444 (PRAVDDQGFK…ANAVVFDWEP (90 aa)) enclose the OCT domain. The tract at residues 457 to 513 (GSDLRLEDHSRPTRDEKRLQERERRAAKVTARDELEAERRAGHWTAADEADEELSQR) is disordered. Residues 458-497 (SDLRLEDHSRPTRDEKRLQERERRAAKVTARDELEAERRA) are compositionally biased toward basic and acidic residues. Residues 504 to 513 (DEADEELSQR) are compositionally biased toward acidic residues.

Belongs to the TRAFAC class OBG-HflX-like GTPase superfamily. OBG GTPase family. In terms of assembly, monomer. Requires Mg(2+) as cofactor.

It is found in the cytoplasm. Its function is as follows. An essential GTPase which binds GTP, GDP and possibly (p)ppGpp with moderate affinity, with high nucleotide exchange rates and a fairly low GTP hydrolysis rate. Plays a role in control of the cell cycle, stress response, ribosome biogenesis and in those bacteria that undergo differentiation, in morphogenesis control. The sequence is that of GTPase Obg from Kineococcus radiotolerans (strain ATCC BAA-149 / DSM 14245 / SRS30216).